The primary structure comprises 148 residues: Caltractin (148 aa).

4 EF-hand domains span residues 4–39, 40–75, 77–112, and 113–148; these read EQKQ…LGFE, PKKE…KMGE, DSRE…LGEN, and LTDE…TSLF. Ca(2+) contacts are provided by aspartate 17, aspartate 19, serine 21, threonine 23, glutamate 28, aspartate 53, aspartate 55, serine 57, threonine 59, and glutamate 64. 5 residues coordinate Ca(2+): aspartate 126, aspartate 128, aspartate 130, glutamate 132, and glutamate 137.

Belongs to the centrin family. Ubiquitous.

Its function is as follows. This calcium-binding protein is found in the basal body complexes (the functional homolog of the centrosome in animal cell). In mitotic cells it is specifically associated with the poles of the mitotic spindles at the sites of the duplicated basal body complexes. This chain is Caltractin, found in Spermatozopsis similis (Green alga).